The following is an 804-amino-acid chain: MDLPVDEWKSYLLQKWASLPTSVQVTISTAETLRDIFLHSSSLLQPEDELFLKRLSKGYLVGKDLDAPLFYREEGNKKFQEKDYTGAAVLYSKGVSHSRPNTEDMSLCYANRSAALFHLGEYETCLKDINRAQTHGYPERLQPKIMLRKAECLVALGRLQEASQTISDLERNFTATPTLANVRPQTLQRNLHHLKMKVQEKDKLTETFPAALAKTLEDAALREENEQLSSASSSVGLCIDPLKGRYLVATKDILPGELLVKEDAFVSVLNPGELPPPHHGLDSKWDTRVTNGDLYCHRCLKHTLATVPCDGCSYAKYCSQECLQQAWELYHRTECPLGGLLLTLGVFCHIALRLTLLVGFEDVRKIITKVCDKISNKDICLPESNNQVKTLNYGLGESEKSGNIIETPIPGCDINGKYENNYNAVFNLLPHTENHSPEHKFLCALCVSALCRQLEAASFQAIPTERSVNSSQLQAAVTPELCPDVTIWGVAMLRHMLQLHCNAQAMTTIQHTGSKGSIVTDSRQVRLATGIFPVVSLLNHSCSPNTSMSFISTVAAIQASQRIRKGQEILHCYGPHKSRMGVAERQQKLRSQYFFDCACPACQTEAHRMAAEPRWEAFCCNSCGAPMQGDDVLHCGSRSCAESAVSRDHLVSRLQDLQQQVGVAQKLLRDGELERAVQQLLGCQRDAESFLWAEHALVGEIADGLARACAALGDWQKAATHLQRSLRVVEVRHGPSSVEMGHELFKLAQIFFNGFAVPEALSTIQKAEEALLLHCGPWDDEIQELQKMKSCLLDLPPTPVGPAV.

S-adenosyl-L-methionine is bound at residue 112–114; sequence RSA. Residues 233-574 form the SET domain; sequence SSVGLCIDPL…KGQEILHCYG (342 aa). Zn(2+) is bound by residues C296, C299, C309, C312, C318, C322, H331, and C335. The MYND-type zinc-finger motif lies at 296–335; the sequence is CHRCLKHTLATVPCDGCSYAKYCSQECLQQAWELYHRTEC. Residues N427, 539–540, Y573, and F595 each bind S-adenosyl-L-methionine; that span reads NH.

It belongs to the class V-like SAM-binding methyltransferase superfamily. As to quaternary structure, interacts (via MYND-type zinc finger) with HDAC1.

It is found in the nucleus. The protein localises to the cytoplasm. The catalysed reaction is L-lysyl-[protein] + S-adenosyl-L-methionine = N(6)-methyl-L-lysyl-[protein] + S-adenosyl-L-homocysteine + H(+). In terms of biological role, protein-lysine N-methyltransferase. Monomethylates PRMT5, modulating its transcriptional activity. May also act as a histone methyltransferase. Plays a critical role in cardiac development. Acts as a key epigenetic regulator of gene expression during cardiac development via its dual activities as a methyltransferase and negative regulator of HDAC1. The polypeptide is Protein-lysine N-methyltransferase SMYD4 (SMYD4) (Pongo abelii (Sumatran orangutan)).